Here is a 180-residue protein sequence, read N- to C-terminus: MTGLLAFLLIVLEWTRPSLPSPLRPICDLRVLNHFIKEAQDAEAAMKTCREGCTLSESVVVPQTTVDFDVWEKKNASAKAEEVQSGLWLLQQAFNFLRTSVTNAALHSHIDNAVRNLLSVNAVLRSLNIQEFTPQANGAEIEGTWRASSAAELLQVYVNFLRGKARLLLLDAQACQQDVS.

Residues 1-20 (MTGLLAFLLIVLEWTRPSLP) form the signal peptide. Disulfide bonds link Cys27–Cys175 and Cys49–Cys53. N-linked (GlcNAc...) asparagine glycosylation is present at Asn75.

The protein belongs to the EPO/TPO family.

The protein resides in the secreted. Functionally, erythropoietin is the principal hormone involved in the regulation of erythrocyte differentiation and the maintenance of a physiological level of circulating erythrocyte mass. The chain is Erythropoietin (epo) from Tetraodon nigroviridis (Spotted green pufferfish).